We begin with the raw amino-acid sequence, 359 residues long: Mannose-1-phosphate guanylyltransferase catalytic subunit beta (359 aa).

The interval 2–221 is substrate-binding domain; the sequence is KALILVGGFG…EGFWMDVGQP (220 aa). GDP-alpha-D-mannose is bound at residue aspartate 109. Residue aspartate 109 coordinates Mg(2+). Residue lysine 161 is part of the active site. Residue aspartate 217 participates in GDP-alpha-D-mannose binding. Aspartate 217 contributes to the Mg(2+) binding site. Residues 244–359 are hexapeptide repeat domain; it reads ATGNGIIGPV…SSIPEPEIIM (116 aa).

The protein belongs to the transferase hexapeptide repeat family. As to quaternary structure, component of the GMPPA-GMPPB mannose-1-phosphate guanylyltransferase complex composed of 4 GMPPA subunits and 8 gmppB subunits; the complex is organized into three layers, a central layer made up of 2 gmppA dimers sandwiched between two layers each made up of 2 gmppB dimers. gmppB catalytic activity is reduced when part of the complex and binding of GDP-alpha-D-Mannose by gmppA induces allosteric feedback inhibition of gmppB. Mg(2+) serves as cofactor.

The catalysed reaction is alpha-D-mannose 1-phosphate + GTP + H(+) = GDP-alpha-D-mannose + diphosphate. Its pathway is nucleotide-sugar biosynthesis; GDP-alpha-D-mannose biosynthesis; GDP-alpha-D-mannose from alpha-D-mannose 1-phosphate (GTP route): step 1/1. Its activity is regulated as follows. Enzyme activity is reduced by incorporation into the GMPPA-GMPPB mannose-1-phosphate guanylyltransferase complex. Allosterically inhibited, when part of the GMPPA-GMPPB complex, by GDP-alpha-D-mannose binding to GMPPA. Catalytic subunit of the GMPPA-GMPPB mannose-1-phosphate guanylyltransferase complex. Catalyzes the formation of GDP-mannose, an essential precursor of glycan moieties of glycoproteins and glycolipids. Can catalyze the reverse reaction in vitro. Together with GMPPA regulates GDP-alpha-D-mannose levels. This Dictyostelium discoideum (Social amoeba) protein is Mannose-1-phosphate guanylyltransferase catalytic subunit beta (gmppB).